The chain runs to 302 residues: tRNA pseudouridine synthase B (302 aa).

The Nucleophile role is filled by Asp38.

It belongs to the pseudouridine synthase TruB family. Type 1 subfamily.

The catalysed reaction is uridine(55) in tRNA = pseudouridine(55) in tRNA. Its function is as follows. Responsible for synthesis of pseudouridine from uracil-55 in the psi GC loop of transfer RNAs. This chain is tRNA pseudouridine synthase B, found in Ligilactobacillus salivarius (strain UCC118) (Lactobacillus salivarius).